The primary structure comprises 297 residues: Ribosomal RNA small subunit methyltransferase A (297 aa).

Positions 31, 33, 58, 79, 104, and 129 each coordinate S-adenosyl-L-methionine.

It belongs to the class I-like SAM-binding methyltransferase superfamily. rRNA adenine N(6)-methyltransferase family. RsmA subfamily.

The protein resides in the cytoplasm. It catalyses the reaction adenosine(1518)/adenosine(1519) in 16S rRNA + 4 S-adenosyl-L-methionine = N(6)-dimethyladenosine(1518)/N(6)-dimethyladenosine(1519) in 16S rRNA + 4 S-adenosyl-L-homocysteine + 4 H(+). Its function is as follows. Specifically dimethylates two adjacent adenosines (A1518 and A1519) in the loop of a conserved hairpin near the 3'-end of 16S rRNA in the 30S particle. May play a critical role in biogenesis of 30S subunits. The sequence is that of Ribosomal RNA small subunit methyltransferase A from Staphylococcus aureus (strain Mu3 / ATCC 700698).